The primary structure comprises 249 residues: UPF0758 protein BMEI0718 (249 aa).

The tract at residues 1-34 is disordered; sequence MAKKKDTPGDGEFPGFSDTLQRTPKLEKPHYAGH. Positions 24-34 are enriched in basic and acidic residues; it reads PKLEKPHYAGH. Positions 127 to 249 constitute an MPN domain; sequence VLGSWDKVIN…HASLRSLRLI (123 aa). The Zn(2+) site is built by His-198, His-200, and Asp-211. Positions 198-211 match the JAMM motif motif; the sequence is HNHPSGDPTPSRAD.

The protein belongs to the UPF0758 family.

The polypeptide is UPF0758 protein BMEI0718 (Brucella melitensis biotype 1 (strain ATCC 23456 / CCUG 17765 / NCTC 10094 / 16M)).